The chain runs to 270 residues: Urease accessory protein UreD (270 aa).

Belongs to the UreD family. In terms of assembly, ureD, UreF and UreG form a complex that acts as a GTP-hydrolysis-dependent molecular chaperone, activating the urease apoprotein by helping to assemble the nickel containing metallocenter of UreC. The UreE protein probably delivers the nickel.

Its subcellular location is the cytoplasm. In terms of biological role, required for maturation of urease via the functional incorporation of the urease nickel metallocenter. The protein is Urease accessory protein UreD of Beijerinckia indica subsp. indica (strain ATCC 9039 / DSM 1715 / NCIMB 8712).